We begin with the raw amino-acid sequence, 77 residues long: Acyl carrier protein (77 aa).

A Carrier domain is found at 1 to 76 (MENFDKVKDI…DAVKFINSIE (76 aa)). The residue at position 36 (Ser36) is an O-(pantetheine 4'-phosphoryl)serine.

The protein belongs to the acyl carrier protein (ACP) family. In terms of processing, 4'-phosphopantetheine is transferred from CoA to a specific serine of apo-ACP by AcpS. This modification is essential for activity because fatty acids are bound in thioester linkage to the sulfhydryl of the prosthetic group.

It localises to the cytoplasm. It participates in lipid metabolism; fatty acid biosynthesis. Carrier of the growing fatty acid chain in fatty acid biosynthesis. This chain is Acyl carrier protein, found in Staphylococcus saprophyticus subsp. saprophyticus (strain ATCC 15305 / DSM 20229 / NCIMB 8711 / NCTC 7292 / S-41).